Consider the following 488-residue polypeptide: MTKNNEAGWNLDHSYTTLPQSFYTEIPPTPVSSPELVKLNHSLAISLGFNPEELKKEAEIAIFAGNALPEGAHPLAQAYAGHQFGHFNMLGDGRALLIGEQMTPSGKRFDIQLKGSGPTPYSRRGDGRAALGPMLREYIISEAMYALDIPTTRSLAVVTTGEPTYRETKLPGAILTRVASSHIRVGTFQYAAARGSIEDLQSLADYTIKRHYPEIEAHENRYTALLQEVIKKQASLIAKWQLVGFIHGVMNTDNITISGETIDYGPCAFMDNYDQGTVFSSIDTQGRYAYGNQPYMAAWDLARLAESLIPILHEDEEEALKIAQDEISKFSVQYEKQWFLGMKKKLGLFSNEEQDQSLIEQLLKMMEKFKADYTNTFRSLTLNTIENTALFESPEFKEWYKLWQSRLEKQEESKENAYEMMKNNNPSIIPRNHRVEEALEAAVTNGDYSVMEKLLEALSNPYAYATEQEEYCVPPAPTNRPYRTFCGT.

Positions 91, 93, 94, 114, 126, 127, 177, and 184 each coordinate ATP. A disordered region spans residues 108-127 (RFDIQLKGSGPTPYSRRGDG). Aspartate 253 acts as the Proton acceptor in catalysis. Mg(2+) is bound by residues asparagine 254 and aspartate 263. Aspartate 263 serves as a coordination point for ATP.

It belongs to the SELO family. The cofactor is Mg(2+). Requires Mn(2+) as cofactor.

The catalysed reaction is L-seryl-[protein] + ATP = 3-O-(5'-adenylyl)-L-seryl-[protein] + diphosphate. It catalyses the reaction L-threonyl-[protein] + ATP = 3-O-(5'-adenylyl)-L-threonyl-[protein] + diphosphate. The enzyme catalyses L-tyrosyl-[protein] + ATP = O-(5'-adenylyl)-L-tyrosyl-[protein] + diphosphate. It carries out the reaction L-histidyl-[protein] + UTP = N(tele)-(5'-uridylyl)-L-histidyl-[protein] + diphosphate. The catalysed reaction is L-seryl-[protein] + UTP = O-(5'-uridylyl)-L-seryl-[protein] + diphosphate. It catalyses the reaction L-tyrosyl-[protein] + UTP = O-(5'-uridylyl)-L-tyrosyl-[protein] + diphosphate. Its function is as follows. Nucleotidyltransferase involved in the post-translational modification of proteins. It can catalyze the addition of adenosine monophosphate (AMP) or uridine monophosphate (UMP) to a protein, resulting in modifications known as AMPylation and UMPylation. In Bacillus cereus (strain AH820), this protein is Protein nucleotidyltransferase YdiU.